Here is a 107-residue protein sequence, read N- to C-terminus: uncharacterized protein (107 aa).

A disordered region spans residues 87-107 (KNRNGPKAEKRRPYVRAHAKW).

This is an uncharacterized protein from Saccharomyces cerevisiae (strain ATCC 204508 / S288c) (Baker's yeast).